A 646-amino-acid polypeptide reads, in one-letter code: Heat shock 70 kDa protein (646 aa).

Residues 613–632 (GGAPGGMPGAAPGGFPGGAP) show a composition bias toward gly residues. The disordered stretch occupies residues 613–646 (GGAPGGMPGAAPGGFPGGAPGSNDNEGPTVEEVD).

Belongs to the heat shock protein 70 family.

This chain is Heat shock 70 kDa protein (hsps-1), found in Neurospora crassa (strain ATCC 24698 / 74-OR23-1A / CBS 708.71 / DSM 1257 / FGSC 987).